We begin with the raw amino-acid sequence, 1065 residues long: N-terminal acetyltransferase B complex auxiliary subunit NAA25 (1065 aa).

Residues 294-327 (VDKLRIQGRLLARANDYSAAVDVYKKILELSPDD) form a TPR repeat.

Belongs to the MDM20/NAA25 family. As to expression, ubiquitously expressed, with a higher expression in vascular bundles, hydathodes, leaf primordia and the base of the trichomes.

The protein localises to the cytoplasm. In terms of biological role, auxiliary subunit of the NatB N-alpha-acetyltransferase complex. Required for flowering time regulation and for vegetative and reproductive plant development. This chain is N-terminal acetyltransferase B complex auxiliary subunit NAA25, found in Arabidopsis thaliana (Mouse-ear cress).